An 86-amino-acid polypeptide reads, in one-letter code: Small ribosomal subunit protein bS16 (86 aa).

It belongs to the bacterial ribosomal protein bS16 family.

This Carboxydothermus hydrogenoformans (strain ATCC BAA-161 / DSM 6008 / Z-2901) protein is Small ribosomal subunit protein bS16.